The sequence spans 52 residues: Ribosome modulation factor (52 aa).

The protein belongs to the ribosome modulation factor family.

The protein localises to the cytoplasm. Its function is as follows. During stationary phase, converts 70S ribosomes to an inactive dimeric form (100S ribosomes). The protein is Ribosome modulation factor of Xenorhabdus nematophila (strain ATCC 19061 / DSM 3370 / CCUG 14189 / LMG 1036 / NCIMB 9965 / AN6).